The primary structure comprises 241 residues: Tryptophan synthase alpha chain (241 aa).

Active-site proton acceptor residues include glutamate 31 and aspartate 42.

It belongs to the TrpA family. In terms of assembly, tetramer of two alpha and two beta chains.

The catalysed reaction is (1S,2R)-1-C-(indol-3-yl)glycerol 3-phosphate + L-serine = D-glyceraldehyde 3-phosphate + L-tryptophan + H2O. It participates in amino-acid biosynthesis; L-tryptophan biosynthesis; L-tryptophan from chorismate: step 5/5. Its function is as follows. The alpha subunit is responsible for the aldol cleavage of indoleglycerol phosphate to indole and glyceraldehyde 3-phosphate. The sequence is that of Tryptophan synthase alpha chain from Staphylococcus saprophyticus subsp. saprophyticus (strain ATCC 15305 / DSM 20229 / NCIMB 8711 / NCTC 7292 / S-41).